The chain runs to 416 residues: Probable sarcosine oxidase (416 aa).

10 to 40 (DVIVVGAGVMGSSAAYQLAKRGQKTLLLEQF) provides a ligand contact to FAD. Position 325 is an S-8alpha-FAD cysteine (Cys-325).

The protein belongs to the MSOX/MTOX family. The cofactor is FAD.

It catalyses the reaction sarcosine + O2 + H2O = formaldehyde + glycine + H2O2. The chain is Probable sarcosine oxidase from Arabidopsis thaliana (Mouse-ear cress).